The following is a 449-amino-acid chain: Probable secreted beta-glucosidase ARB_04747 (449 aa).

An N-terminal signal peptide occupies residues 1-21 (MKFSSGILSLAVAASVQSVQA). Asn57 is a glycosylation site (N-linked (GlcNAc...) asparagine). Residues 96–185 (SPPACPAPSY…RPFPDGEIDC (90 aa)) are disordered. Residues 98 to 125 (PACPAPSYVPSPPAAPSSPPAAPQPPSK) show a composition bias toward pro residues. The segment covering 131–150 (EEPKKPEEPKKPEGPKKPEG) has biased composition (basic and acidic residues).

The protein belongs to the SUN family.

The protein localises to the secreted. Its subcellular location is the cell wall. In terms of biological role, cell surface beta-glucosidase involved in cytokinesis, cell wall biogenesis, adhesion to host tissue; thus playing an important role in the host-pathogen interaction. Has hydrolytic activity on linear (1-&gt;3)-beta-D-glucans such as laminaribiose and other laminarioligosaccharides. The sequence is that of Probable secreted beta-glucosidase ARB_04747 from Arthroderma benhamiae (strain ATCC MYA-4681 / CBS 112371) (Trichophyton mentagrophytes).